We begin with the raw amino-acid sequence, 500 residues long: L-arabinose isomerase (500 aa).

The Mn(2+) site is built by E306, E333, H349, and H448.

It belongs to the arabinose isomerase family. The cofactor is Mn(2+).

The catalysed reaction is beta-L-arabinopyranose = L-ribulose. The protein operates within carbohydrate degradation; L-arabinose degradation via L-ribulose; D-xylulose 5-phosphate from L-arabinose (bacterial route): step 1/3. Its function is as follows. Catalyzes the conversion of L-arabinose to L-ribulose. The protein is L-arabinose isomerase of Shewanella baltica (strain OS223).